Consider the following 350-residue polypeptide: MVTQAATRPSNDAGQDGVTEPDILAVARQQVLERGEGLNQEQVLQVLQLSEDRLEELLVLAHDVRMRWCGPEVEVEGIISLKTGGCPEDCHFCSQSGLFSSPVRSAWLDIPSLVEAAKQTAKSGATEFCIVAAVRGPDARLLSQVAAGIEAIRNEVEINVACSLGMLTAEQVEQLAAMGVHRYNHNLETARSYFTNVVTTHTWEERWQTLTMVRDAGMEVCCGGILGMGETLEQRAEFAANLAELDPDEVPLNFLNPRPGTPFGDLEVLPAGEALKAVGAFRLALPRTMLRFAGGREITLGDLGAKRGILGGINAVIVGNYLTTLGRPAEADLELLEDLQMPLKALNASL.

Residues 1 to 13 show a composition bias toward polar residues; it reads MVTQAATRPSNDA. Residues 1–20 are disordered; that stretch reads MVTQAATRPSNDAGQDGVTE. Positions 71 to 296 constitute a Radical SAM core domain; sequence PEVEVEGIIS…RTMLRFAGGR (226 aa). Cys86, Cys90, and Cys93 together coordinate [4Fe-4S] cluster. Cys129, Cys162, Cys221, and Arg291 together coordinate [2Fe-2S] cluster.

Belongs to the radical SAM superfamily. Biotin synthase family. In terms of assembly, homodimer. [4Fe-4S] cluster serves as cofactor. The cofactor is [2Fe-2S] cluster.

It carries out the reaction (4R,5S)-dethiobiotin + (sulfur carrier)-SH + 2 reduced [2Fe-2S]-[ferredoxin] + 2 S-adenosyl-L-methionine = (sulfur carrier)-H + biotin + 2 5'-deoxyadenosine + 2 L-methionine + 2 oxidized [2Fe-2S]-[ferredoxin]. It participates in cofactor biosynthesis; biotin biosynthesis; biotin from 7,8-diaminononanoate: step 2/2. Functionally, catalyzes the conversion of dethiobiotin (DTB) to biotin by the insertion of a sulfur atom into dethiobiotin via a radical-based mechanism. This Mycobacterium ulcerans (strain Agy99) protein is Biotin synthase.